Consider the following 502-residue polypeptide: uncharacterized protein (502 aa).

Low complexity-rich tracts occupy residues 1–10 (MQSTTNNNTN), 28–47 (SNRS…NNLS), and 155–171 (NTED…SVNS). Disordered regions lie at residues 1 to 57 (MQST…VISY), 155 to 181 (NTED…LSAR), 212 to 362 (SLGN…TDKF), and 438 to 487 (TIDQ…TSNL). The segment covering 212–230 (SLGNSERNSPDRPSTQGDS) has biased composition (polar residues). Composition is skewed to low complexity over residues 242 to 290 (RNAS…SSRN) and 309 to 327 (SNKN…TSIK). Positions 339 to 348 (QTNKSKNQRG) are enriched in polar residues. Residues 446–460 (TSDKNNSTKSNTKYN) are compositionally biased toward low complexity. Residues 470–487 (SYGTSKRSHNRSSNTSNL) show a composition bias toward polar residues.

The protein localises to the virion. This is an uncharacterized protein from Acanthamoeba polyphaga (Amoeba).